The primary structure comprises 161 residues: Dihydrofolate reductase (161 aa).

Residues 1–160 form the DHFR domain; the sequence is MTMVGLIWAQ…LRYRLYSYHR (160 aa). Residue 7–9 coordinates substrate; it reads IWA. Residues 8 to 9 and 16 to 21 contribute to the NADP(+) site; these read WA and IGRGGD. Residues Asp29 and Arg34 each contribute to the substrate site. Residue 45–48 participates in NADP(+) binding; that stretch reads GRRT. A substrate-binding site is contributed by Arg62. Residues 67–70, Gly82, and 96–101 contribute to the NADP(+) site; these read LSRQ and IGGGQV. Substrate is bound by residues Tyr102 and Thr115.

This sequence belongs to the dihydrofolate reductase family.

It carries out the reaction (6S)-5,6,7,8-tetrahydrofolate + NADP(+) = 7,8-dihydrofolate + NADPH + H(+). It participates in cofactor biosynthesis; tetrahydrofolate biosynthesis; 5,6,7,8-tetrahydrofolate from 7,8-dihydrofolate: step 1/1. Key enzyme in folate metabolism. Catalyzes an essential reaction for de novo glycine and purine synthesis, and for DNA precursor synthesis. This Mycobacterium tuberculosis (strain CDC 1551 / Oshkosh) protein is Dihydrofolate reductase (folA).